We begin with the raw amino-acid sequence, 527 residues long: GMP synthase [glutamine-hydrolyzing] (527 aa).

The Glutamine amidotransferase type-1 domain maps to 4 to 202; that stretch reads KILILDFGSQ…VLKICGAKPD (199 aa). The active-site Nucleophile is Cys81. Residues His176 and Glu178 contribute to the active site. The GMPS ATP-PPase domain occupies 203 to 395; the sequence is WEMGNYIDEA…LGLPPSMVYR (193 aa). ATP is bound at residue 230–236; that stretch reads SGGVDSS.

In terms of assembly, homodimer.

The catalysed reaction is XMP + L-glutamine + ATP + H2O = GMP + L-glutamate + AMP + diphosphate + 2 H(+). Its pathway is purine metabolism; GMP biosynthesis; GMP from XMP (L-Gln route): step 1/1. Catalyzes the synthesis of GMP from XMP. The polypeptide is GMP synthase [glutamine-hydrolyzing] (Paraburkholderia phymatum (strain DSM 17167 / CIP 108236 / LMG 21445 / STM815) (Burkholderia phymatum)).